Reading from the N-terminus, the 376-residue chain is PqqA peptide cyclase (376 aa).

Residues 4–219 (VPPPLSVLLE…VETARRSLGD (216 aa)) form the Radical SAM core domain. Residues Cys-18, Cys-22, and Cys-25 each coordinate [4Fe-4S] cluster.

The protein belongs to the radical SAM superfamily. PqqE family. As to quaternary structure, interacts with PqqD. The interaction is necessary for activity of PqqE. The cofactor is [4Fe-4S] cluster.

It carries out the reaction [PQQ precursor protein] + S-adenosyl-L-methionine = E-Y cross-linked-[PQQ precursor protein] + 5'-deoxyadenosine + L-methionine + H(+). It functions in the pathway cofactor biosynthesis; pyrroloquinoline quinone biosynthesis. In terms of biological role, catalyzes the cross-linking of a glutamate residue and a tyrosine residue in the PqqA protein as part of the biosynthesis of pyrroloquinoline quinone (PQQ). This chain is PqqA peptide cyclase, found in Xanthomonas campestris pv. campestris (strain 8004).